The chain runs to 92 residues: Bombyxin A-7 (92 aa).

The first 19 residues, 1 to 19 (MKLLLAIALMLTIVMWVST), serve as a signal peptide directing secretion. Q20 carries the pyrrolidone carboxylic acid modification. Disulfide bonds link C29–C79, C41–C92, and C78–C83. A propeptide spans 50 to 70 (SDAQYASYGSAWLMPYSEGRG) (c peptide like).

The protein belongs to the insulin family. In terms of assembly, heterodimer of a B chain and an A chain linked by two disulfide bonds.

The protein localises to the secreted. In terms of biological role, brain peptide responsible for activation of prothoracic glands to produce ecdysone in insects. The protein is Bombyxin A-7 (BBXA7) of Bombyx mori (Silk moth).